The sequence spans 308 residues: uncharacterized protein (308 aa).

2 stretches are compositionally biased toward polar residues: residues 138-148 and 205-229; these read WSFTKHGSNTP and STSH…QPPS. Disordered stretches follow at residues 138–157 and 205–235; these read WSFT…PLCN and STSH…TDAS.

Its subcellular location is the cytoplasm. This is an uncharacterized protein from Schizosaccharomyces pombe (strain 972 / ATCC 24843) (Fission yeast).